Reading from the N-terminus, the 328-residue chain is uncharacterized protein (328 aa).

One can recognise a G-patch domain in the interval 10–55 (KMGFGHAMLLKMGWKGKGLGVEEDGRTEIIVNKKKQDKVGVGASIS). Positions 97–291 (EKITFKRTIK…KKSFSVSKTR (195 aa)) are disordered. Basic residues predominate over residues 101–110 (FKRTIKKNSK). A compositionally biased stretch (acidic residues) spans 116–126 (SDSDSDSDSES). Composition is skewed to low complexity over residues 141-158 (DSDSSCSDSSSSSSSSSS) and 210-240 (SSSSSDDSCSSESDSSSSSSSSSSSSDSSSE). The segment covering 248-257 (KNKNKNKNKK) has biased composition (basic residues).

This is an uncharacterized protein from Dictyostelium discoideum (Social amoeba).